We begin with the raw amino-acid sequence, 556 residues long: Oxygen-dependent choline dehydrogenase (556 aa).

Position 4-33 (4-33 (DYIIIGAGSAGNVLATRLTEDPNTTVLLLE)) interacts with FAD. The Proton acceptor role is filled by H473.

The protein belongs to the GMC oxidoreductase family. FAD serves as cofactor.

Its subcellular location is the cell membrane. The enzyme catalyses choline + A = betaine aldehyde + AH2. It catalyses the reaction betaine aldehyde + NAD(+) + H2O = glycine betaine + NADH + 2 H(+). It functions in the pathway amine and polyamine biosynthesis; betaine biosynthesis via choline pathway; betaine aldehyde from choline (cytochrome c reductase route): step 1/1. Involved in the biosynthesis of the osmoprotectant glycine betaine. Catalyzes the oxidation of choline to betaine aldehyde and betaine aldehyde to glycine betaine at the same rate. The polypeptide is Oxygen-dependent choline dehydrogenase (Escherichia coli O6:H1 (strain CFT073 / ATCC 700928 / UPEC)).